A 746-amino-acid chain; its full sequence is UvrABC system protein C (746 aa).

In terms of domain architecture, GIY-YIG spans 18–97 (AKPGVYKWRD…IKEFDPRFNV (80 aa)). The UVR domain maps to 211-246 (RPYIAQLTRDMKEASAELEFEKAARLRDQIQMLETV). A disordered region spans residues 557–577 (ANGNDNGEGGSDISGKGHAVP).

Belongs to the UvrC family. Interacts with UvrB in an incision complex.

The protein resides in the cytoplasm. Functionally, the UvrABC repair system catalyzes the recognition and processing of DNA lesions. UvrC both incises the 5' and 3' sides of the lesion. The N-terminal half is responsible for the 3' incision and the C-terminal half is responsible for the 5' incision. In Bifidobacterium longum (strain NCC 2705), this protein is UvrABC system protein C.